A 173-amino-acid chain; its full sequence is Translationally-controlled tumor protein homolog (173 aa).

Residues 1–173 (MIIFKDMITG…FKHGLEEEKV (173 aa)) enclose the TCTP domain.

The protein belongs to the TCTP family. As to expression, expressed by the venom gland.

The protein resides in the secreted. Venom protein that causes edema, enhances vascular permeability and is likely related to the inflammatory activity of the venom. The sequence is that of Translationally-controlled tumor protein homolog from Grammostola rosea (Chilean rose tarantula).